Consider the following 501-residue polypeptide: Actin nucleation-promoting factor WASL (501 aa).

Position 2 is an N-acetylserine (S2). The WH1 domain maps to 31–138; that stretch reads LGKKCVTMSS…KAVTDLLGRR (108 aa). Disordered stretches follow at residues 135–158 and 180–202; these read LGRR…PMAT and SHTK…DIGT. Positions 183–195 are enriched in basic residues; the sequence is KEKKKGKAKKKRL. A CRIB domain is found at 200–213; the sequence is IGTPSNFQHIGHVG. S239 carries the post-translational modification Phosphoserine; by TNK2. Y253 is modified (phosphotyrosine; by FAK1 and TNK2). 2 disordered regions span residues 263 to 405 and 442 to 501; these read EAVK…KAAL and QLKS…EWED. Pro residues-rich tracts occupy residues 273–361 and 368–387; these read APPP…PPPL and APPP…PPGL. At R304 the chain carries Omega-N-methylarginine. WH2 domains follow at residues 401 to 418 and 429 to 446; these read NKAA…LKKV and GRDA…LKSV. Residues 442 to 453 show a composition bias toward polar residues; it reads QLKSVSDGQEST. Phosphoserine is present on residues S480 and S481. The segment covering 482-501 has biased composition (acidic residues); it reads DEDEDDDDEEDFQDDDEWED.

Binds actin and the Arp2/3 complex. Interacts with CDC42. Interacts with FCHSD1. Interacts with FCHSD2. Binds to SH3 domains of GRB2. Interacts with the C-terminal SH3 domain of DNMBP. Interacts with SNX9. Interacts with the WW domains of PRPF40A/FBP11. Interacts with PTK2/FAK1. Interacts with PACSIN1, PACSIN2 and PACSIN3. Interacts with NOSTRIN. Binds to TNK2. Interacts with SNX33. Interacts with NONO (via second RRM domain); the interaction is direct. Component of a multiprotein complex with NONO and SFPQ; associates with the complex via direct interaction with NONO. Post-translationally, phosphorylation at Ser-239, Tyr-253, Ser-480 and Ser-481 enhances actin polymerization activity.

The protein resides in the cytoplasm. It is found in the cytoskeleton. It localises to the nucleus. Regulates actin polymerization by stimulating the actin-nucleating activity of the Arp2/3 complex. Involved in various processes, such as mitosis and cytokinesis, via its role in the regulation of actin polymerization. Together with CDC42, involved in the extension and maintenance of the formation of thin, actin-rich surface projections called filopodia. In addition to its role in the cytoplasm, also plays a role in the nucleus by regulating gene transcription, probably by promoting nuclear actin polymerization. Binds to HSF1/HSTF1 and forms a complex on heat shock promoter elements (HSE) that negatively regulates HSP90 expression. Plays a role in dendrite spine morphogenesis. The polypeptide is Actin nucleation-promoting factor WASL (Wasl) (Rattus norvegicus (Rat)).